Here is a 305-residue protein sequence, read N- to C-terminus: Fumarylacetoacetate hydrolase domain-containing protein 2 homolog (305 aa).

A divalent metal cation contacts are provided by E141, E143, and D172.

This sequence belongs to the FAH family. Requires Ca(2+) as cofactor. Mg(2+) serves as cofactor.

May have hydrolase activity. The sequence is that of Fumarylacetoacetate hydrolase domain-containing protein 2 homolog (fahd2) from Dictyostelium discoideum (Social amoeba).